We begin with the raw amino-acid sequence, 1034 residues long: MFAQLDTKTVYSFMDSLIDLNHYFERAKQFGYHTIGIMDKDNLYGAYHFIKGCQKNGLQPVLGLEIEILYQERQVLLNLIAQNTQGYHQLLKISTAKMSGKLHMDYFCQHLEGIAVIIPSKGWSDTLVVPFDYYMGVDQYTDLSHMDSKRQLIPLRTVRYFAQDDMETLHMLHAIRDNLSLAETPVVESDQELADCQQLTAFYQTHCPQALQNLEDLVSGIYYDFDTNLKLPHFNRDKSAKQELQDLTEAGLKEKGLWKEPYQSRLLHELVIISDMGFDDYFLIVWDLLRFGRSKGYYMGMGRGSAAGSLVAYALNITGIDPVQHDLLFERFLNKERYSMPDIDIDLPDIYRSEFLRYVRNRYGSDHSAQIVTFSTFGQAIRDVFKRFGVPEYELTNLTKKIGFKDSLATVYEKSISFRQVINSRTEFQKAFAIAKRIEGNPRQTSIHAAGIVMSDDALTNHIPLKSGDDMMITQYDAHAVEANGLLKMDFLGLRNLTFVQKMQEKVAKDYGCQIDITAIDLEDPQTLALFAKGDTKGIFQFEQNGAINLLKRIKPQRFEEIVATTSLNRPGASDYTTNFIKRREGQEKIDLIDPVIAPILEPTYGIMLYQEQVMQIAQVYAGFTLGKADLLRRAMSKKNLQEMQKMEEDFIASAKHLGRAEETARGLFKRMEKFAGYGFNRSHAFAYSALAFQLAYFKAHYPAVFYDIMMNYSSSDYITDALESDFQVAQVTINSIPYTDKIEASKIYMGLKNIKGLPRDFAYWIIEQRPFNSVEDFLTRTPEKYQKKVFLEPLIKIGLFDCFEPNRKKILDNLDGLLVFVNELGSLFSDSSFSWVDTKDYSVTEKYSLEQEIVGVGMSKHPLIDIAEKSTQTFTPISQLVKESEAVVLIQIDSIRIIRTKTSGQQMAFLSVNDTKKKLDVTLFPQEYAIYKDQLKEGEFYYLKGRIKERDHRLQMVCQQVQMAISQKYWLLVENHQFDSQISEILGAFPGTTPVVIHYQKNKETIALTKIQVHVTENLKEKLRPFVLKTVFR.

Belongs to the DNA polymerase type-C family. DnaE subfamily. In terms of assembly, DNA polymerase III contains a core (composed of alpha, epsilon and theta chains) that associates with a tau subunit. This core dimerizes to form the PolIII' complex. PolIII' associates with the gamma complex (composed of gamma, delta, delta', psi and chi chains) and with the beta chain to form the complete DNA polymerase III complex.

Its subcellular location is the cytoplasm. The enzyme catalyses DNA(n) + a 2'-deoxyribonucleoside 5'-triphosphate = DNA(n+1) + diphosphate. Functionally, DNA polymerase III is a complex, multichain enzyme responsible for most of the replicative synthesis in bacteria. This DNA polymerase also exhibits 3' to 5' exonuclease activity. The alpha chain is the DNA polymerase. The protein is DNA polymerase III subunit alpha (dnaE) of Streptococcus pyogenes.